Reading from the N-terminus, the 834-residue chain is Glycerol-3-phosphate acyltransferase (834 aa).

The short motif at 309-314 (CHRSHI) is the HXXXXD motif element.

It belongs to the GPAT/DAPAT family.

The protein resides in the cell inner membrane. It carries out the reaction sn-glycerol 3-phosphate + an acyl-CoA = a 1-acyl-sn-glycero-3-phosphate + CoA. The protein operates within phospholipid metabolism; CDP-diacylglycerol biosynthesis; CDP-diacylglycerol from sn-glycerol 3-phosphate: step 1/3. The protein is Glycerol-3-phosphate acyltransferase of Pseudomonas fluorescens (strain ATCC BAA-477 / NRRL B-23932 / Pf-5).